We begin with the raw amino-acid sequence, 154 residues long: Small ribosomal subunit protein bS18 (154 aa).

The disordered stretch occupies residues Met1–Pro82. Positions Lys8 to Lys19 are enriched in low complexity. Residues Ala20–Lys32 show a composition bias toward basic and acidic residues. A compositionally biased stretch (low complexity) spans Thr33–Val49. A compositionally biased stretch (basic and acidic residues) spans Glu50–Pro69.

It belongs to the bacterial ribosomal protein bS18 family. Part of the 30S ribosomal subunit. Forms a tight heterodimer with protein bS6.

Binds as a heterodimer with protein bS6 to the central domain of the 16S rRNA, where it helps stabilize the platform of the 30S subunit. The chain is Small ribosomal subunit protein bS18 from Malacoplasma penetrans (strain HF-2) (Mycoplasma penetrans).